A 359-amino-acid polypeptide reads, in one-letter code: Type-1 angiotensin II receptor A (359 aa).

The Extracellular portion of the chain corresponds to Met-1–Ser-25. The N-linked (GlcNAc...) asparagine glycan is linked to Asn-4. Angiotensin II-binding residues include Gln-15 and Asp-17. 2 disulfide bridges follow: Cys-18/Cys-274 and Cys-101/Cys-180. Residues Tyr-26–Phe-55 traverse the membrane as a helical segment. Over Tyr-56 to Thr-61 the chain is Cytoplasmic. A helical transmembrane segment spans residues Val-62–Ala-89. Residues Met-90–Asn-98 are Extracellular-facing. The helical transmembrane segment at His-99 to Asp-125 threads the bilayer. At Arg-126–Thr-141 the chain is on the cytoplasmic side. The chain crosses the membrane as a helical span at residues Met-142–Ile-165. The Extracellular segment spans residues His-166–Thr-190. Angiotensin II is bound at residue Arg-167. Asn-176 carries N-linked (GlcNAc...) asparagine glycosylation. Positions 182, 183, and 184 each coordinate angiotensin II. An N-linked (GlcNAc...) asparagine glycan is attached at Asn-188. A helical transmembrane segment spans residues Leu-191–Thr-216. Lys-199 contributes to the angiotensin II binding site. Residues Leu-217–Phe-239 are Cytoplasmic-facing. The chain crosses the membrane as a helical span at residues Arg-240–Leu-268. At Gly-269–Asp-278 the chain is on the extracellular side. A helical transmembrane segment spans residues Ile-279–Phe-304. Topologically, residues Leu-305–Glu-359 are cytoplasmic. The span at Ser-335–Ser-347 shows a compositional bias: polar residues. A disordered region spans residues Ser-335–Glu-359. Cys-355 carries the S-palmitoyl cysteine lipid modification.

It belongs to the G-protein coupled receptor 1 family. As to quaternary structure, interacts with MAS1. Interacts with ARRB1. Interacts with FLNA (via filamin repeat 21); increases PKA-mediated phosphorylation of FLNA. C-terminal Ser or Thr residues may be phosphorylated.

It is found in the cell membrane. In terms of biological role, receptor for angiotensin II, a vasoconstricting peptide, which acts as a key regulator of blood pressure and sodium retention by the kidney. The activated receptor in turn couples to G-alpha proteins G(q) (GNAQ, GNA11, GNA14 or GNA15) and thus activates phospholipase C and increases the cytosolic Ca(2+) concentrations, which in turn triggers cellular responses such as stimulation of protein kinase C. This Mus musculus (Mouse) protein is Type-1 angiotensin II receptor A (Agtr1a).